Here is a 73-residue protein sequence, read N- to C-terminus: Translation initiation factor IF-1 (73 aa).

In terms of domain architecture, S1-like spans 1 to 73 (MSEKEAGIEV…SRGRITYRDK (73 aa)).

This sequence belongs to the IF-1 family. As to quaternary structure, component of the 30S ribosomal translation pre-initiation complex which assembles on the 30S ribosome in the order IF-2 and IF-3, IF-1 and N-formylmethionyl-tRNA(fMet); mRNA recruitment can occur at any time during PIC assembly.

Its subcellular location is the cytoplasm. In terms of biological role, one of the essential components for the initiation of protein synthesis. Stabilizes the binding of IF-2 and IF-3 on the 30S subunit to which N-formylmethionyl-tRNA(fMet) subsequently binds. Helps modulate mRNA selection, yielding the 30S pre-initiation complex (PIC). Upon addition of the 50S ribosomal subunit IF-1, IF-2 and IF-3 are released leaving the mature 70S translation initiation complex. The polypeptide is Translation initiation factor IF-1 (Anaeromyxobacter dehalogenans (strain 2CP-C)).